The following is a 312-amino-acid chain: Cobalamin biosynthesis protein CobD (312 aa).

4 consecutive transmembrane segments (helical) span residues 61 to 81 (IALLLAPFTLAAWALARLPLL), 83 to 103 (IIVPVALLYLAVGARSLAQHA), 152 to 172 (DAVFAALFWFLVLGAPGAVLY), and 292 to 312 (GMWLWAALSLAAAILIGAIHA).

This sequence belongs to the CobD/CbiB family.

The protein resides in the cell membrane. The protein operates within cofactor biosynthesis; adenosylcobalamin biosynthesis. In terms of biological role, converts cobyric acid to cobinamide by the addition of aminopropanol on the F carboxylic group. This chain is Cobalamin biosynthesis protein CobD, found in Chromobacterium violaceum (strain ATCC 12472 / DSM 30191 / JCM 1249 / CCUG 213 / NBRC 12614 / NCIMB 9131 / NCTC 9757 / MK).